We begin with the raw amino-acid sequence, 442 residues long: Histidine--tRNA ligase (442 aa).

The protein belongs to the class-II aminoacyl-tRNA synthetase family. Homodimer.

The protein resides in the cytoplasm. The enzyme catalyses tRNA(His) + L-histidine + ATP = L-histidyl-tRNA(His) + AMP + diphosphate + H(+). The polypeptide is Histidine--tRNA ligase (Helicobacter pylori (strain P12)).